The chain runs to 103 residues: Small ribosomal subunit protein uS10 (103 aa).

It belongs to the universal ribosomal protein uS10 family. As to quaternary structure, part of the 30S ribosomal subunit.

Its function is as follows. Involved in the binding of tRNA to the ribosomes. This Acidovorax sp. (strain JS42) protein is Small ribosomal subunit protein uS10.